The sequence spans 336 residues: Eukaryotic translation initiation factor 3 subunit I (336 aa).

6 WD repeats span residues 8–49 (GHER…GTYN), 50–91 (GHNG…KAWE), 93–135 (PTAI…GPQP), 144–183 (PIGS…EVAS), 187–226 (NHIG…VIKS), and 285–324 (GGFG…FRAK).

The protein belongs to the eIF-3 subunit I family. Component of the eukaryotic translation initiation factor 3 (eIF-3) complex.

The protein localises to the cytoplasm. In terms of biological role, component of the eukaryotic translation initiation factor 3 (eIF-3) complex, which is involved in protein synthesis of a specialized repertoire of mRNAs and, together with other initiation factors, stimulates binding of mRNA and methionyl-tRNAi to the 40S ribosome. The eIF-3 complex specifically targets and initiates translation of a subset of mRNAs involved in cell proliferation. The sequence is that of Eukaryotic translation initiation factor 3 subunit I from Puccinia graminis f. sp. tritici (strain CRL 75-36-700-3 / race SCCL) (Black stem rust fungus).